Consider the following 77-residue polypeptide: Translational regulator CsrA (77 aa).

The tract at residues 58–77 (ANRRTAEETLDQASRLLSQK) is disordered. Residues 68 to 77 (DQASRLLSQK) are compositionally biased toward polar residues.

Belongs to the CsrA/RsmA family. As to quaternary structure, homodimer; the beta-strands of each monomer intercalate to form a hydrophobic core, while the alpha-helices form wings that extend away from the core.

The protein resides in the cytoplasm. In terms of biological role, a translational regulator that binds mRNA to regulate translation initiation and/or mRNA stability. Usually binds in the 5'-UTR at or near the Shine-Dalgarno sequence preventing ribosome-binding, thus repressing translation. Its main target seems to be the major flagellin gene, while its function is anatagonized by FliW. This Magnetococcus marinus (strain ATCC BAA-1437 / JCM 17883 / MC-1) protein is Translational regulator CsrA.